A 603-amino-acid polypeptide reads, in one-letter code: Growth-regulating factor 6 (603 aa).

A disordered region spans residues 34-58; the sequence is KHGRGNAGDQEHEWRPPAKQARGGD. In terms of domain architecture, QLQ spans 158 to 193; it reads PFTPSQWIELEHQALIYKYLAANSPVPHSLLIPIRR. Residues 223–267 enclose the WRC domain; that stretch reads DPEPGRCRRTDGKKWRCSRDAVADQKYCERHMNRGRHRSRKHVEG. 2 consecutive short sequence motifs (bipartite nuclear localization signal) follow at residues 228-238 and 256-263; these read RCRRTDGKKWR and RGRHRSRK. Over residues 561 to 571 the composition is skewed to low complexity; it reads FGSVSSSTGSS. A disordered region spans residues 561–582; the sequence is FGSVSSSTGSSPRLENHSVYDG.

Belongs to the GRF family.

Its subcellular location is the nucleus. In terms of biological role, transcription activator that plays a regulatory role in gibberellin-induced stem elongation. This Oryza sativa subsp. japonica (Rice) protein is Growth-regulating factor 6 (GRF6).